A 173-amino-acid chain; its full sequence is uncharacterized protein (173 aa).

This is an uncharacterized protein from Mycobacterium tuberculosis (strain CDC 1551 / Oshkosh).